Reading from the N-terminus, the 267-residue chain is 3-methyl-2-oxobutanoate hydroxymethyltransferase (267 aa).

Positions 46 and 85 each coordinate Mg(2+). 3-methyl-2-oxobutanoate is bound by residues 46 to 47 (DS), D85, and K115. E117 is a Mg(2+) binding site. The active-site Proton acceptor is the E184.

This sequence belongs to the PanB family. In terms of assembly, homodecamer; pentamer of dimers. Mg(2+) serves as cofactor.

The protein resides in the cytoplasm. The catalysed reaction is 3-methyl-2-oxobutanoate + (6R)-5,10-methylene-5,6,7,8-tetrahydrofolate + H2O = 2-dehydropantoate + (6S)-5,6,7,8-tetrahydrofolate. It functions in the pathway cofactor biosynthesis; (R)-pantothenate biosynthesis; (R)-pantoate from 3-methyl-2-oxobutanoate: step 1/2. Catalyzes the reversible reaction in which hydroxymethyl group from 5,10-methylenetetrahydrofolate is transferred onto alpha-ketoisovalerate to form ketopantoate. This Syntrophotalea carbinolica (strain DSM 2380 / NBRC 103641 / GraBd1) (Pelobacter carbinolicus) protein is 3-methyl-2-oxobutanoate hydroxymethyltransferase.